The primary structure comprises 478 residues: Proline--tRNA ligase (478 aa).

It belongs to the class-II aminoacyl-tRNA synthetase family. ProS type 3 subfamily. Homodimer.

It localises to the cytoplasm. It carries out the reaction tRNA(Pro) + L-proline + ATP = L-prolyl-tRNA(Pro) + AMP + diphosphate. Its function is as follows. Catalyzes the attachment of proline to tRNA(Pro) in a two-step reaction: proline is first activated by ATP to form Pro-AMP and then transferred to the acceptor end of tRNA(Pro). The chain is Proline--tRNA ligase from Clostridium botulinum (strain Langeland / NCTC 10281 / Type F).